A 374-amino-acid chain; its full sequence is Relaxin-3 receptor 2 (374 aa).

Topologically, residues 1 to 43 (MPTLNTSASPPTFFWANASGGSVLSADDAPMPVKFLALRLMVA) are extracellular. 2 N-linked (GlcNAc...) asparagine glycosylation sites follow: Asn5 and Asn17. Residues 44–64 (LAYGLVGAIGLLGNLAVLWVL) form a helical membrane-spanning segment. Topologically, residues 65 to 78 (SNCARRAPGPPSDT) are cytoplasmic. Residues 79–99 (FVFNLALADLGLALTLPFWAA) form a helical membrane-spanning segment. Topologically, residues 100–116 (ESALDFHWPFGGALCKM) are extracellular. Cys114 and Cys191 are disulfide-bonded. A helical membrane pass occupies residues 117–137 (VLTATVLNVYASIFLITALSV). Residues 138 to 154 (ARYWVVAMAAGPGTHLS) are Cytoplasmic-facing. Residues 155–175 (LFWARIATLAVWAAAALVTVP) traverse the membrane as a helical segment. Topologically, residues 176–209 (TAVFGVEGEVCGVRLCLLRFPSRYWLGAYQLQRV) are extracellular. The helical transmembrane segment at 210 to 230 (VLAFMVPLGVITTSYLLLLAF) threads the bilayer. The Cytoplasmic segment spans residues 231-249 (LQRRQRRRQDSRVVARSVR). A helical membrane pass occupies residues 250 to 270 (ILVASFFLCWFPNHVVTLWGV). At 271-281 (LVKFDLVPWNS) the chain is on the extracellular side. The chain crosses the membrane as a helical span at residues 282–302 (TFYTIQTYVFPVTTCLAHSNS). The Cytoplasmic portion of the chain corresponds to 303 to 374 (CLNPVLYCLL…LTNLDRGTPG (72 aa)).

This sequence belongs to the G-protein coupled receptor 1 family. Expressed in a broader range of tissues including brain, kidney, testis, thymus, placenta, prostate, salivary gland, thyroid and colon.

Its subcellular location is the cell membrane. In terms of biological role, high affinity receptor for INSL5. Also acts as a receptor for RLN3/relaxin-3, as well as bradykinin and kallidin. Binding of the ligand inhibit cAMP accumulation. The polypeptide is Relaxin-3 receptor 2 (RXFP4) (Homo sapiens (Human)).